The primary structure comprises 390 residues: Lipid-A-disaccharide synthase (390 aa).

Belongs to the LpxB family.

The catalysed reaction is a lipid X + a UDP-2-N,3-O-bis[(3R)-3-hydroxyacyl]-alpha-D-glucosamine = a lipid A disaccharide + UDP + H(+). The protein operates within bacterial outer membrane biogenesis; LPS lipid A biosynthesis. Condensation of UDP-2,3-diacylglucosamine and 2,3-diacylglucosamine-1-phosphate to form lipid A disaccharide, a precursor of lipid A, a phosphorylated glycolipid that anchors the lipopolysaccharide to the outer membrane of the cell. In Haemophilus influenzae (strain 86-028NP), this protein is Lipid-A-disaccharide synthase.